Reading from the N-terminus, the 597-residue chain is Elongation factor 4 (597 aa).

The region spanning 2–184 (QHIRNFSIIA…TIVARVPAPQ (183 aa)) is the tr-type G domain. GTP is bound by residues 14–19 (DHGKST) and 131–134 (NKMD).

Belongs to the TRAFAC class translation factor GTPase superfamily. Classic translation factor GTPase family. LepA subfamily.

The protein localises to the cell inner membrane. It carries out the reaction GTP + H2O = GDP + phosphate + H(+). Required for accurate and efficient protein synthesis under certain stress conditions. May act as a fidelity factor of the translation reaction, by catalyzing a one-codon backward translocation of tRNAs on improperly translocated ribosomes. Back-translocation proceeds from a post-translocation (POST) complex to a pre-translocation (PRE) complex, thus giving elongation factor G a second chance to translocate the tRNAs correctly. Binds to ribosomes in a GTP-dependent manner. The protein is Elongation factor 4 of Bordetella petrii (strain ATCC BAA-461 / DSM 12804 / CCUG 43448).